A 227-amino-acid polypeptide reads, in one-letter code: Enolase-phosphatase E1 (227 aa).

Residues aspartate 11 and glutamate 13 each coordinate Mg(2+). Substrate is bound by residues serine 118–serine 119 and lysine 161. Position 186 (aspartate 186) interacts with Mg(2+).

The protein belongs to the HAD-like hydrolase superfamily. MasA/MtnC family. As to quaternary structure, monomer. The cofactor is Mg(2+).

It localises to the cytoplasm. It is found in the nucleus. The catalysed reaction is 5-methylsulfanyl-2,3-dioxopentyl phosphate + H2O = 1,2-dihydroxy-5-(methylsulfanyl)pent-1-en-3-one + phosphate. It participates in amino-acid biosynthesis; L-methionine biosynthesis via salvage pathway; L-methionine from S-methyl-5-thio-alpha-D-ribose 1-phosphate: step 3/6. The protein operates within amino-acid biosynthesis; L-methionine biosynthesis via salvage pathway; L-methionine from S-methyl-5-thio-alpha-D-ribose 1-phosphate: step 4/6. Bifunctional enzyme that catalyzes the enolization of 2,3-diketo-5-methylthiopentyl-1-phosphate (DK-MTP-1-P) into the intermediate 2-hydroxy-3-keto-5-methylthiopentenyl-1-phosphate (HK-MTPenyl-1-P), which is then dephosphorylated to form the acireductone 1,2-dihydroxy-3-keto-5-methylthiopentene (DHK-MTPene). The sequence is that of Enolase-phosphatase E1 from Saccharomyces cerevisiae (strain ATCC 204508 / S288c) (Baker's yeast).